The primary structure comprises 301 residues: GTP cyclohydrolase FolE2 (301 aa).

It belongs to the GTP cyclohydrolase IV family.

The enzyme catalyses GTP + H2O = 7,8-dihydroneopterin 3'-triphosphate + formate + H(+). The protein operates within cofactor biosynthesis; 7,8-dihydroneopterin triphosphate biosynthesis; 7,8-dihydroneopterin triphosphate from GTP: step 1/1. Its function is as follows. Converts GTP to 7,8-dihydroneopterin triphosphate. The chain is GTP cyclohydrolase FolE2 from Exiguobacterium sibiricum (strain DSM 17290 / CCUG 55495 / CIP 109462 / JCM 13490 / 255-15).